The chain runs to 212 residues: Small ribosomal subunit protein uS5 (212 aa).

The interval 1–42 (MPGRERRDGGRSADKNDNNKGRNDRGRNDRNNRRGRGRDDDR) is disordered. Positions 45–108 (YIERVVTINR…EEARKNFFRV (64 aa)) constitute an S5 DRBM domain.

The protein belongs to the universal ribosomal protein uS5 family. Part of the 30S ribosomal subunit. Contacts proteins S4 and S8.

Functionally, with S4 and S12 plays an important role in translational accuracy. In terms of biological role, located at the back of the 30S subunit body where it stabilizes the conformation of the head with respect to the body. The protein is Small ribosomal subunit protein uS5 of Corynebacterium kroppenstedtii (strain DSM 44385 / JCM 11950 / CIP 105744 / CCUG 35717).